We begin with the raw amino-acid sequence, 272 residues long: ATP phosphoribosyltransferase regulatory subunit (272 aa).

The protein belongs to the class-II aminoacyl-tRNA synthetase family. HisZ subfamily. As to quaternary structure, heteromultimer composed of HisG and HisZ subunits.

The protein localises to the cytoplasm. It participates in amino-acid biosynthesis; L-histidine biosynthesis; L-histidine from 5-phospho-alpha-D-ribose 1-diphosphate: step 1/9. In terms of biological role, required for the first step of histidine biosynthesis. May allow the feedback regulation of ATP phosphoribosyltransferase activity by histidine. The protein is ATP phosphoribosyltransferase regulatory subunit of Staphylococcus aureus (strain MRSA252).